We begin with the raw amino-acid sequence, 732 residues long: 1,4-alpha-glucan branching enzyme GlgB (732 aa).

Asp409 serves as the catalytic Nucleophile. Glu462 acts as the Proton donor in catalysis.

It belongs to the glycosyl hydrolase 13 family. GlgB subfamily. Monomer.

The enzyme catalyses Transfers a segment of a (1-&gt;4)-alpha-D-glucan chain to a primary hydroxy group in a similar glucan chain.. Its pathway is glycan biosynthesis; glycogen biosynthesis. Functionally, catalyzes the formation of the alpha-1,6-glucosidic linkages in glycogen by scission of a 1,4-alpha-linked oligosaccharide from growing alpha-1,4-glucan chains and the subsequent attachment of the oligosaccharide to the alpha-1,6 position. The protein is 1,4-alpha-glucan branching enzyme GlgB of Corynebacterium diphtheriae (strain ATCC 700971 / NCTC 13129 / Biotype gravis).